The chain runs to 92 residues: Phospholemman (92 aa).

A signal peptide spans 1-20; the sequence is MASPGHILIVCVCLLSMASA. At 21–35 the chain is on the extracellular side; sequence EAPQEPDPFTYDYHT. The helical transmembrane segment at 36 to 56 threads the bilayer; it reads LRIGGLTIAGILFILGILIIL. Topologically, residues 57–92 are cytoplasmic; it reads SKRCRCKFNQQQRTGEPDEEEGTFRSSIRRLSTRRR. A lipid anchor (S-palmitoyl cysteine) is attached at Cys60. Cys62 carries the post-translational modification S-glutathionyl cysteine; alternate. Cys62 is lipidated: S-palmitoyl cysteine; alternate. Residues 66–92 are disordered; the sequence is QQQRTGEPDEEEGTFRSSIRRLSTRRR. Residue Thr79 is modified to Phosphothreonine. A Phosphoserine modification is found at Ser82. Phosphoserine; by PKA and PKC is present on Ser83. Positions 83–92 are enriched in basic residues; that stretch reads SIRRLSTRRR. Residue Ser88 is modified to Phosphoserine; by PKA. Thr89 carries the post-translational modification Phosphothreonine; by PKC.

It belongs to the FXYD family. Homotetramer. Monomer. Regulatory subunit of the sodium/potassium-transporting ATPase (NKA) which is composed of a catalytic alpha subunit, a non-catalytic beta subunit and an additional regulatory subunit. The monomeric form associates with NKA while the oligomeric form does not. Interacts with the catalytic alpha-1 subunit ATP1A1. Also interacts with the catalytic alpha-2 and alpha-3 subunits ATP1A2 and ATP1A3. Very little interaction with ATP1A1, ATP1A2 or ATP1A3 when phosphorylated at Ser-83. Interacts with the non-catalytic beta-1 subunit ATP1B1. Oxidative stress decreases interaction with ATP1A1 but increases interaction with ATP1B1. In terms of processing, major plasma membrane substrate for cAMP-dependent protein kinase (PKA) and protein kinase C (PKC) in several different tissues. Phosphorylated in response to insulin and adrenergic stimulation. Phosphorylation at Ser-88 stimulates sodium/potassium-transporting ATPase activity while the unphosphorylated form inhibits sodium/potassium-transporting ATPase activity. Phosphorylation increases tetramerization, decreases binding to ATP1A1 and reduces inhibition of ATP1A1 activity. Phosphorylation at Ser-83 leads to greatly reduced interaction with ATP1A1, ATP1A2 and ATP1A3. May be phosphorylated by DMPK. Post-translationally, palmitoylation increases half-life and stability and is enhanced upon phosphorylation at Ser-88 by PKA. In adult brain, highest levels are found in the cerebellum and in the lateral, third and fourth ventricles of the choroid plexus (at protein level). Also detected in cells of a portion of the ependymal lining of the lateral ventricle on its rostral surface posterior to the caudate putamen (at protein level). Expressed in a subset of neurons which secrete gonadotropin-releasing hormone.

The protein localises to the cell membrane. The protein resides in the sarcolemma. Its subcellular location is the apical cell membrane. It is found in the membrane. It localises to the caveola. The protein localises to the T-tubule. Functionally, associates with and regulates the activity of the sodium/potassium-transporting ATPase (NKA) which transports Na(+) out of the cell and K(+) into the cell. Inhibits NKA activity in its unphosphorylated state and stimulates activity when phosphorylated. Reduces glutathionylation of the NKA beta-1 subunit ATP1B1, thus reversing glutathionylation-mediated inhibition of ATP1B1. Contributes to female sexual development by maintaining the excitability of neurons which secrete gonadotropin-releasing hormone. The protein is Phospholemman of Rattus norvegicus (Rat).